Consider the following 501-residue polypeptide: GMP synthase [glutamine-hydrolyzing] (501 aa).

In terms of domain architecture, Glutamine amidotransferase type-1 spans 1–185 (MVLVVDYGSQ…LFNVCKLEKN (185 aa)). C75 acts as the Nucleophile in catalysis. Residues H159 and E161 contribute to the active site. The 191-residue stretch at 186-376 (WKIGDLVEEK…LGIPDRIINR (191 aa)) folds into the GMPS ATP-PPase domain. 213-219 (SGGVDSS) contacts ATP.

Homodimer.

It carries out the reaction XMP + L-glutamine + ATP + H2O = GMP + L-glutamate + AMP + diphosphate + 2 H(+). The protein operates within purine metabolism; GMP biosynthesis; GMP from XMP (L-Gln route): step 1/1. Functionally, catalyzes the synthesis of GMP from XMP. In Thermotoga maritima (strain ATCC 43589 / DSM 3109 / JCM 10099 / NBRC 100826 / MSB8), this protein is GMP synthase [glutamine-hydrolyzing] (guaA).